The chain runs to 423 residues: GPI mannosyltransferase 2 (423 aa).

9 helical membrane-spanning segments follow: residues 7–27 (LTLI…ILSG), 102–122 (VILG…LVLY), 128–148 (IFNP…PTAT), 151–171 (APYT…LLSI), 191–211 (TGIF…AHIF), 228–248 (FLSA…TETV), 298–318 (LAMP…SHLV), 333–353 (PPPI…LLLF), and 400–420 (YWIG…AGHY).

The protein belongs to the PIGV family.

Its subcellular location is the endoplasmic reticulum membrane. It functions in the pathway glycolipid biosynthesis; glycosylphosphatidylinositol-anchor biosynthesis. Mannosyltransferase involved in glycosylphosphatidylinositol-anchor biosynthesis. Transfers the second mannose to the glycosylphosphatidylinositol during GPI precursor assembly. The chain is GPI mannosyltransferase 2 (GPI18) from Cryptococcus neoformans var. neoformans serotype D (strain B-3501A) (Filobasidiella neoformans).